A 545-amino-acid chain; its full sequence is Autoimmune regulator (545 aa).

The HSR domain occupies 1-105 (MATDAALRRL…ILDSFPKDVD (105 aa)). 2 short sequence motifs (LXXLL motif) span residues 7–11 (LRRLL) and 63–67 (LSWLL). Disordered stretches follow at residues 101-178 (PKDV…LPLG) and 234-290 (SKFE…SDPQ). Positions 116 to 128 (PAVPKALVPPPRL) are enriched in pro residues. Residues 140 to 152 (AAAPAALTPRGTA) are compositionally biased toward low complexity. The SAND domain maps to 181–280 (IQTMSASVQR…ARLGQQGSVP (100 aa)). Interaction with histone H3 not methylated at 'Lys-4' stretches follow at residues 295–298 (NEDE), 304–312 (DGGELICCD), and 331–335 (PSGTW). The segment at 296–343 (EDECAVCRDGGELICCDGCPRAFHLACLSPPLREIPSGTWRCSSCLQA) adopts a PHD-type 1 zinc-finger fold. The disordered stretch occupies residues 348–382 (VQPRAEEPRPQEPPVETPLPPGLRSAGEEVRGPPG). Residues 358-368 (QEPPVETPLPP) show a composition bias toward pro residues. The LXXLL motif 3 motif lies at 414–418 (LHPLL). The PHD-type 2 zinc finger occupies 434 to 475 (CGVCGDGTDVLRCTHCAAAFHWRCHFPAGTSRPGTGLRCRSC). The segment at 489–508 (APSPARLAPGPAKDDTASHE) is disordered. The LXXLL motif 4 motif lies at 516 to 520 (LESLL).

Homodimer and homotetramer. Interacts with CREBBP. Interacts preferentially with histone H3 that is not methylated at 'Lys-4'. Binds with lower affinity to histone H3 that is monomethylated at 'Lys-4'. Trimethylation of histone H3 at 'Lys-4' or phosphorylation at 'Thr-3' abolish the interaction. Binds with lower affinity to histone H3 that is acetylated at 'Lys-4', or that is acetylated at 'Lys-9' or trimethylated at 'Lys-9'. Binds histone H3 that is dimethylated at 'Arg-2' with very low affinity. Phosphorylated. Phosphorylation could trigger oligomerization. As to expression, widely expressed. Expressed at higher level in thymus (medullary epithelial cells and monocyte-dendritic cells), pancreas, adrenal cortex and testis. Expressed at lower level in the spleen, fetal liver and lymph nodes. In secondary lymphoid organs, expressed in a discrete population of bone marrow-derived toleregenic antigen presenting cells (APCs) called extrathymic AIRE expressing cells (eTAC)(at protein level). Isoform 2 and isoform 3 seem to be less frequently expressed than isoform 1, if at all.

The protein localises to the nucleus. It localises to the cytoplasm. Functionally, transcription factor playing an essential role to promote self-tolerance in the thymus by regulating the expression of a wide array of self-antigens that have the commonality of being tissue-restricted in their expression pattern in the periphery, called tissue restricted antigens (TRA). Binds to G-doublets in an A/T-rich environment; the preferred motif is a tandem repeat of 5'-ATTGGTTA-3' combined with a 5'-TTATTA-3' box. Binds to nucleosomes. Binds to chromatin and interacts selectively with histone H3 that is not methylated at 'Lys-4', not phosphorylated at 'Thr-3' and not methylated at 'Arg-2'. Functions as a sensor of histone H3 modifications that are important for the epigenetic regulation of gene expression. Mainly expressed by medullary thymic epithelial cells (mTECs), induces the expression of thousands of tissue-restricted proteins, which are presented on major histocompatibility complex class I (MHC-I) and MHC-II molecules to developing T-cells percolating through the thymic medulla. Also induces self-tolerance through other mechanisms such as the regulation of the mTEC differentiation program. Controls the medullary accumulation of thymic dendritic cells and the development of regulatory T-cell through the regulation of XCL1 expression. Regulates the production of CCR4 and CCR7 ligands in medullary thymic epithelial cells and alters the coordinated maturation and migration of thymocytes. In thimic B-cells, allows the presentation of licensing-dependent endogenous self-anitgen for negative selection. In secondary lymphoid organs, induces functional inactivation of CD4(+) T-cells. Expressed by a distinct bone marrow-derived population, induces self-tolerance through a mechanism that does not require regulatory T-cells and is resitant to innate inflammatory stimuli. The sequence is that of Autoimmune regulator (AIRE) from Homo sapiens (Human).